Reading from the N-terminus, the 206-residue chain is Transmembrane emp24 domain-containing protein bai (206 aa).

The signal sequence occupies residues 1 to 20 (MMKAILATLAIFGCIWPGQS). Residues 21–172 (VMFHLTPNTQ…RDTNEKTNSR (152 aa)) are Lumenal-facing. The GOLD domain maps to 30–140 (QKCLKEDIQA…LKPLEVDLKR (111 aa)). A helical membrane pass occupies residues 173 to 193 (VLFFSIFSMCCLLGLATWQVL). At 194 to 206 (YLRRYFKAKKLIE) the chain is on the cytoplasmic side.

This sequence belongs to the EMP24/GP25L family.

The protein localises to the membrane. In terms of biological role, eca and bai are essential, though not redundant, for dorsoventral patterning of the embryo. Specifically required during early embryogenesis for the activity of maternal tkv, while the zygotic tkv is not affected. In Drosophila willistoni (Fruit fly), this protein is Transmembrane emp24 domain-containing protein bai.